We begin with the raw amino-acid sequence, 313 residues long: N-acetyl-gamma-glutamyl-phosphate reductase (313 aa).

The active site involves Cys117.

The protein belongs to the NAGSA dehydrogenase family. Type 2 subfamily.

The protein resides in the cytoplasm. It catalyses the reaction N-acetyl-L-glutamate 5-semialdehyde + phosphate + NADP(+) = N-acetyl-L-glutamyl 5-phosphate + NADPH + H(+). Its pathway is amino-acid biosynthesis; L-arginine biosynthesis; N(2)-acetyl-L-ornithine from L-glutamate: step 3/4. Catalyzes the NADPH-dependent reduction of N-acetyl-5-glutamyl phosphate to yield N-acetyl-L-glutamate 5-semialdehyde. The polypeptide is N-acetyl-gamma-glutamyl-phosphate reductase (Burkholderia cenocepacia (strain HI2424)).